The chain runs to 607 residues: UvrABC system protein C (607 aa).

The GIY-YIG domain occupies 15 to 93; sequence RKPGVYRMLD…IKELKPPYNI (79 aa). The UVR domain maps to 203–238; that stretch reads REVADQLSTDMEAAAAALEFEKAALLRDQLAAIQAV. The segment covering 542–551 has biased composition (basic residues); sequence HRARRGKARK. A disordered region spans residues 542 to 561; that stretch reads HRARRGKARKQSTLDEIPGI.

It belongs to the UvrC family. In terms of assembly, interacts with UvrB in an incision complex.

It localises to the cytoplasm. Its function is as follows. The UvrABC repair system catalyzes the recognition and processing of DNA lesions. UvrC both incises the 5' and 3' sides of the lesion. The N-terminal half is responsible for the 3' incision and the C-terminal half is responsible for the 5' incision. The polypeptide is UvrABC system protein C (Alcanivorax borkumensis (strain ATCC 700651 / DSM 11573 / NCIMB 13689 / SK2)).